A 184-amino-acid polypeptide reads, in one-letter code: Large ribosomal subunit protein uL15 (184 aa).

Positions 1–55 are disordered; sequence MDLSSLSPAKGSVKNKKRVGRGQGSGNGTTAGKGNKGQQSRSGYKRPVSEGGQMP. Residues 21-35 show a composition bias toward gly residues; that stretch reads RGQGSGNGTTAGKGN.

The protein belongs to the universal ribosomal protein uL15 family. Part of the 50S ribosomal subunit.

Functionally, binds to the 23S rRNA. The chain is Large ribosomal subunit protein uL15 from Prosthecochloris aestuarii (strain DSM 271 / SK 413).